The sequence spans 781 residues: N-acetylneuraminate (7)9-O-acetyltransferase (781 aa).

The Cytoplasmic portion of the chain corresponds to 1 to 15 (MAVLAYNLGKREINQ). The chain crosses the membrane as a helical span at residues 16 to 36 (YFSIKNAKLLAAAAVVLLTVF). Topologically, residues 37–308 (HAASRHYGSS…SAPPLSVLQK (272 aa)) are lumenal. Ser94 (acyl-ester intermediate) is an active-site residue. Residues Asn139, Asn185, and Asn239 are each glycosylated (N-linked (GlcNAc...) asparagine). Residues Asp264 and His267 contribute to the active site. The chain crosses the membrane as a helical span at residues 309–329 (LAAAVLLVSVVCFVLLGFSSH). Residues 330–350 (RKSRPAPDVESGEEKKHPAAV) form a disordered region. Topologically, residues 330 to 354 (RKSRPAPDVESGEEKKHPAAVGQLN) are cytoplasmic. Residues 355-375 (PKGPLLAIGKMSLIMLYFYLC) form a helical membrane-spanning segment. Over 376 to 386 (DRADIFMKEQK) the chain is Lumenal. The chain crosses the membrane as a helical span at residues 387–407 (FYTHSAFFIPLIYIFVLGVFY). Residues 408-430 (SENSKETKLLNREQTDEWKGWMQ) lie on the Cytoplasmic side of the membrane. A helical membrane pass occupies residues 431–451 (LVILIYHISGASAFIPVYMHV). Residue Arg452 is a topological domain, lumenal. A helical transmembrane segment spans residues 453–473 (VLVAAYLFQTGYGHFSFFWLK). Residues 474–477 (GDFG) are Cytoplasmic-facing. The chain crosses the membrane as a helical span at residues 478–498 (LYRVCQVLFRLNFLVVVLCLV). The Lumenal portion of the chain corresponds to 499-504 (MDRPYQ). The helical transmembrane segment at 505 to 525 (FYYFVPLVTFWFAVIYATMAL) threads the bilayer. At 526–537 (WPQILQKQANGS) the chain is on the cytoplasmic side. A helical membrane pass occupies residues 538–558 (AFWNLALLLKLLGLLLFIGFF). At 559 to 595 (AYSQELFEGIFSVWPLSKLFELQGSIHEWWFRWKLDR) the chain is on the lumenal side. A helical transmembrane segment spans residues 596 to 616 (FAVVNGMLFAFIYLLLQKYQL). Topologically, residues 617 to 629 (LSEGKGEPLFSNK) are cytoplasmic. Residues 630-650 (ISNCLLFVSVVSFMTYSIWAS) form a helical membrane-spanning segment. Residues 651 to 660 (GCKNKSECNE) are Lumenal-facing. Asn654 carries N-linked (GlcNAc...) asparagine glycosylation. Residues 661 to 681 (MHPYISVILAFILIRNIPGYA) traverse the membrane as a helical segment. Topologically, residues 682-687 (RSLYSS) are cytoplasmic. Residues 688 to 708 (FFAWFGKISLELFICQYHIWL) traverse the membrane as a helical segment. The Lumenal segment spans residues 709–714 (AADTKG). The chain crosses the membrane as a helical span at residues 715–735 (ILVLIPGNPTLNIIVSTFIFV). Topologically, residues 736-756 (CVAHEISQITNDLAQVAIPKE) are cytoplasmic. The chain crosses the membrane as a helical span at residues 757–777 (SGPLLKRLLGAGVFLVLVLTL). Residues 778–781 (SQKD) are Lumenal-facing.

It belongs to the PC-esterase family. CASD1 subfamily.

The protein localises to the golgi apparatus membrane. It catalyses the reaction CMP-N-acetyl-beta-neuraminate + acetyl-CoA = CMP-N-acetyl-9-O-acetyl-beta-neuraminate + CoA. The enzyme catalyses a ganglioside GD3 (d18:1(4E)) + acetyl-CoA = a ganglioside Ac-O-7-GD3(d18:1(4E)) + CoA. The catalysed reaction is CMP-N-acetyl-beta-neuraminate + acetyl-CoA = CMP-N-acetyl-7-O-acetyl-beta-neuraminate + CoA. Functionally, key enzyme in the biosynthesis of O-acetylated (O-Ac) sialoglycans such as gangliosides O-AcGD3 and O-AcGD2, which affect various processes such as cell-cell interactions, host-pathogen recognition. Catalyzes the transfer of an acetyl group from a donor, the acetyl-coenzyme-A molecule (acetyl-CoA), to the C7/8/9 OH-position of a sialic acid residue. The primary site of O-acetyl group transfer on sialic acid seems to depend on cell type and can be C7, from which the O-acetyl group could subsequently migrate to the C8 and then to the C9 position, or at C9 with possibility of migrating to the C8 and then to the C7 position. Together with ST8SIA1 (GD3 synthase) it increases the levels of ganglioside Ac-O-7-GD3. Can transfer the acetyl group from acetyl-CoA to free sialate (N-acetylneuraminate, Neu5Ac) in vitro, but has preferred substrate specificity for CMP-activated sialate (CMP-Neu5Ac), resulting in the formation of 9-O-acetylated CMP-Neu5Ac (CMP-Neu5,9Ac2). CMP-Neu5,9Ac2 may be used by sialyltransferases as a sialate donor for glycoconjugate acceptors such as ganglioside GD3. O-acetylation at position C9 of ganglioside GD3 can counteract the pro-apoptotic effects of the ganglioside GD3 in tumor cells. The protein is N-acetylneuraminate (7)9-O-acetyltransferase of Danio rerio (Zebrafish).